Consider the following 357-residue polypeptide: Ferrochelatase (357 aa).

Histidine 193 and glutamate 272 together coordinate Fe cation.

It belongs to the ferrochelatase family.

Its subcellular location is the cytoplasm. It catalyses the reaction heme b + 2 H(+) = protoporphyrin IX + Fe(2+). It functions in the pathway porphyrin-containing compound metabolism; protoheme biosynthesis; protoheme from protoporphyrin-IX: step 1/1. In terms of biological role, catalyzes the ferrous insertion into protoporphyrin IX. The polypeptide is Ferrochelatase (Hyphomonas neptunium (strain ATCC 15444)).